A 222-amino-acid chain; its full sequence is Ribosomal RNA small subunit methyltransferase G (222 aa).

S-adenosyl-L-methionine contacts are provided by residues G85, L90, 108–110 (DAT), 136–137 (VE), and R150.

The protein belongs to the methyltransferase superfamily. RNA methyltransferase RsmG family.

Its subcellular location is the cytoplasm. Specifically methylates the N7 position of a guanine in 16S rRNA. This chain is Ribosomal RNA small subunit methyltransferase G, found in Chlorobium phaeobacteroides (strain DSM 266 / SMG 266 / 2430).